Here is a 66-residue protein sequence, read N- to C-terminus: Toxin Boma6e (66 aa).

The LCN-type CS-alpha/beta domain maps to 2–64 (RDAYIAQNYN…VPLKVQGKCH (63 aa)). Intrachain disulfides connect Cys-12–Cys-63, Cys-22–Cys-46, and Cys-26–Cys-48.

The protein belongs to the long (3 C-C) scorpion toxin superfamily. Only three disulfide bridges can be formed, because only seven cysteines are present. In terms of tissue distribution, expressed by the venom gland.

The protein localises to the secreted. Its function is as follows. Binds voltage-independently at site-3 of sodium channels (Nav) and inhibits the inactivation of the activated channels, thereby blocking neuronal transmission. In Buthus occitanus mardochei (Moroccan scorpion), this protein is Toxin Boma6e.